A 582-amino-acid chain; its full sequence is PTS system lactose-specific EIICB component (582 aa).

Residues 8-409 (IEKGKPFFEK…VVDVIIYYPF (402 aa)) form the PTS EIIC type-3 domain. Helical transmembrane passes span 30-50 (GFIAAIPIILFSSIFILITYV), 64-84 (GILMKPYNYTMGIVGLLVAGT), 103-123 (INFISTMMAAICGFLFLAADP), 137-157 (KGLLTAFISAFITVIVYNFFV), 176-196 (VFKDIFPLSAVILILYALDLL), 222-242 (GWIGVTLIFGAFAFFWFVGIH), 283-303 (FVATMGGTGATLVVPFMFMWL), 339-359 (VFFIPFIFAPIVNIWIFKFFV), and 381-401 (IVMGTGFAFWSFVLAILLIVV). Residues 453–473 (ASEADTDDTSSVDETTSTSST) form a disordered region. Over residues 464–473 (VDETTSTSST) the composition is skewed to low complexity. In terms of domain architecture, PTS EIIB type-3 spans 479–582 (QTNVLVLCAG…LEFVKQQFNN (104 aa)). Cysteine 486 (phosphocysteine intermediate; for EIIB activity) is an active-site residue. Phosphocysteine; by EIIA is present on cysteine 486.

The protein resides in the cell membrane. It carries out the reaction lactose(out) + N(pros)-phospho-L-histidyl-[protein] = lactose 6-phosphate(in) + L-histidyl-[protein]. Its function is as follows. The phosphoenolpyruvate-dependent sugar phosphotransferase system (sugar PTS), a major carbohydrate active transport system, catalyzes the phosphorylation of incoming sugar substrates concomitantly with their translocation across the cell membrane. The enzyme II LacEF PTS system is involved in lactose transport. This is PTS system lactose-specific EIICB component from Staphylococcus epidermidis (strain ATCC 35984 / DSM 28319 / BCRC 17069 / CCUG 31568 / BM 3577 / RP62A).